A 117-amino-acid chain; its full sequence is Calcitonin receptor-stimulating peptide 2 (117 aa).

Positions 1–25 (MGFWKFPPFLVLSILVLYQAGMFHT) are cleaved as a signal peptide. Positions 26–79 (APVRLPLESSFDSATLTEEEVSLLLVAMVKDYVQMKATVLEQESEDFSITAQEK) are excised as a propeptide. The cysteines at positions 81 and 86 are disulfide-linked.

This sequence belongs to the calcitonin family. Mainly expressed in the thyroid gland and CNS. Found in the nerve cells of the cerebrum, hippocampus, hypothalamus, pons/midbrain and thalamus. Also detected in the glia-like cells of pons/midbrain and in meninx of tactus opticus.

It is found in the secreted. The chain is Calcitonin receptor-stimulating peptide 2 (CRSP2) from Sus scrofa (Pig).